A 301-amino-acid chain; its full sequence is MKSHNAPITKVGVILRPSSPELKTTFLQIKEELNNAGIEVILESISGGMIELLGRDFHQLATQCDALFSLGGDGTLISMLRRAFEYELPCMGINTGRLGFLTALMPQNLHTFTSHLKSGDYTLQKHLVLQARIYSTLNTAYENNLDNKNQTPTQTLIAINEFLISKHELSGMVHIDASIDRKYFNTYRCDGLIIGTPAGSTAYNISAGGSVIYPYCRNILLTPIAPHSLTQRPLVLSDEFMLEFYAKERAKLIIDGQEMIDIMPSDRVQIQALPQSAMLMYPPTRDYFSVLKEKFKWGEEH.

The active-site Proton acceptor is aspartate 73. Residues 73 to 74 (DG), 160 to 161 (NE), arginine 188, aspartate 190, alanine 198, 201 to 206 (TAYNIS), alanine 225, and glutamine 257 contribute to the NAD(+) site.

This sequence belongs to the NAD kinase family. The cofactor is a divalent metal cation.

The protein resides in the cytoplasm. It carries out the reaction NAD(+) + ATP = ADP + NADP(+) + H(+). In terms of biological role, involved in the regulation of the intracellular balance of NAD and NADP, and is a key enzyme in the biosynthesis of NADP. Catalyzes specifically the phosphorylation on 2'-hydroxyl of the adenosine moiety of NAD to yield NADP. This is NAD kinase from Helicobacter hepaticus (strain ATCC 51449 / 3B1).